Here is a 527-residue protein sequence, read N- to C-terminus: Peptide chain release factor 3 (527 aa).

A tr-type G domain is found at 9 to 278 (DIRRTFAIIS…GLTQWAPKPQ (270 aa)). GTP is bound by residues 18-25 (SHPDAGKT), 86-90 (DTPGH), and 140-143 (NKCD).

Belongs to the TRAFAC class translation factor GTPase superfamily. Classic translation factor GTPase family. PrfC subfamily.

It is found in the cytoplasm. In terms of biological role, increases the formation of ribosomal termination complexes and stimulates activities of RF-1 and RF-2. It binds guanine nucleotides and has strong preference for UGA stop codons. It may interact directly with the ribosome. The stimulation of RF-1 and RF-2 is significantly reduced by GTP and GDP, but not by GMP. The polypeptide is Peptide chain release factor 3 (Shewanella denitrificans (strain OS217 / ATCC BAA-1090 / DSM 15013)).